The following is a 269-amino-acid chain: Microtubule-associated protein RP/EB family member 1 (269 aa).

The 103-residue stretch at 14-116 (NLSRHDMLAW…FVQWFKKFFD (103 aa)) folds into the Calponin-homology (CH) domain. Residues 168-190 (RTAVSNKPPAQGISKKPATVGNG) are disordered. In terms of domain architecture, EB1 C-terminal spans 186–256 (TVGNGDDESA…LYATDEGFVI (71 aa)).

The protein belongs to the MAPRE family.

It is found in the cytoplasm. It localises to the cytoskeleton. Its subcellular location is the microtubule organizing center. The protein resides in the centrosome. The protein localises to the golgi apparatus. It is found in the spindle. It localises to the spindle pole. Functionally, plus-end tracking protein (+TIP) that binds to the plus-end of microtubules and regulates the dynamics of the microtubule cytoskeleton. Promotes cytoplasmic microtubule nucleation and elongation. Involved in mitotic spindle positioning by stabilizing microtubules and promoting dynamic connection between astral microtubules and the cortex during mitotic chromosome segregation. The chain is Microtubule-associated protein RP/EB family member 1 (mapre1) from Xenopus tropicalis (Western clawed frog).